The sequence spans 690 residues: Elongation factor G (690 aa).

The 276-residue stretch at 8–283 (EDYRNFGIMA…AVVDYLPSPL (276 aa)) folds into the tr-type G domain. Residues 17–24 (AHIDAGKT), 81–85 (DTPGH), and 135–138 (NKMD) contribute to the GTP site.

This sequence belongs to the TRAFAC class translation factor GTPase superfamily. Classic translation factor GTPase family. EF-G/EF-2 subfamily.

The protein resides in the cytoplasm. Functionally, catalyzes the GTP-dependent ribosomal translocation step during translation elongation. During this step, the ribosome changes from the pre-translocational (PRE) to the post-translocational (POST) state as the newly formed A-site-bound peptidyl-tRNA and P-site-bound deacylated tRNA move to the P and E sites, respectively. Catalyzes the coordinated movement of the two tRNA molecules, the mRNA and conformational changes in the ribosome. The chain is Elongation factor G from Bradyrhizobium sp. (strain BTAi1 / ATCC BAA-1182).